A 316-amino-acid polypeptide reads, in one-letter code: Ribosomal RNA small subunit methyltransferase H (316 aa).

S-adenosyl-L-methionine-binding positions include 39 to 41 (GGH), Asp-56, Phe-82, Asp-103, and Gln-110.

Belongs to the methyltransferase superfamily. RsmH family.

It localises to the cytoplasm. The catalysed reaction is cytidine(1402) in 16S rRNA + S-adenosyl-L-methionine = N(4)-methylcytidine(1402) in 16S rRNA + S-adenosyl-L-homocysteine + H(+). In terms of biological role, specifically methylates the N4 position of cytidine in position 1402 (C1402) of 16S rRNA. This chain is Ribosomal RNA small subunit methyltransferase H, found in Methylacidiphilum infernorum (isolate V4) (Methylokorus infernorum (strain V4)).